The following is a 444-amino-acid chain: Protein CPn_0808/CP_1063/CPj0808/CpB0837 (444 aa).

Polar residues predominate over residues 1–13 (MTSGVSGSSSQDP). Positions 1-124 (MTSGVSGSSS…NNYDSPSLPT (124 aa)) are disordered. Low complexity predominate over residues 15 to 24 (LAAQLAQSSQ). Over residues 25-42 (KAGNAQSGHDTKNVTKQG) the composition is skewed to polar residues. The span at 77–86 (SKGEKSEKSG) shows a compositional bias: basic and acidic residues. A compositionally biased stretch (low complexity) spans 88–103 (SKSSTSVASASETATA). A compositionally biased stretch (polar residues) spans 113 to 124 (RQNNYDSPSLPT).

Belongs to the chlamydial CPn_0808/CT_579/TC_0868 family.

This is Protein CPn_0808/CP_1063/CPj0808/CpB0837 from Chlamydia pneumoniae (Chlamydophila pneumoniae).